The primary structure comprises 332 residues: 2,3-diketo-L-gulonate reductase (332 aa).

His44 acts as the Proton donor in catalysis. NAD(+)-binding positions include 168–174 (ITMVDMS), 224–225 (WK), and 304–306 (GHE).

It belongs to the LDH2/MDH2 oxidoreductase family. DlgD subfamily. Homodimer.

The protein localises to the cytoplasm. The enzyme catalyses 3-dehydro-L-gulonate + NAD(+) = 2,3-dioxo-L-gulonate + NADH + H(+). The catalysed reaction is 3-dehydro-L-gulonate + NADP(+) = 2,3-dioxo-L-gulonate + NADPH + H(+). Functionally, catalyzes the reduction of 2,3-diketo-L-gulonate in the presence of NADH, to form 3-keto-L-gulonate. The chain is 2,3-diketo-L-gulonate reductase from Salmonella paratyphi C (strain RKS4594).